We begin with the raw amino-acid sequence, 154 residues long: ATP synthase subunit b (154 aa).

Residues 9–29 (AIAFVIFVWFCMKYVWPPLMA) form a helical membrane-spanning segment.

Belongs to the ATPase B chain family. As to quaternary structure, F-type ATPases have 2 components, F(1) - the catalytic core - and F(0) - the membrane proton channel. F(1) has five subunits: alpha(3), beta(3), gamma(1), delta(1), epsilon(1). F(0) has three main subunits: a(1), b(2) and c(10-14). The alpha and beta chains form an alternating ring which encloses part of the gamma chain. F(1) is attached to F(0) by a central stalk formed by the gamma and epsilon chains, while a peripheral stalk is formed by the delta and b chains.

It localises to the cell inner membrane. In terms of biological role, f(1)F(0) ATP synthase produces ATP from ADP in the presence of a proton or sodium gradient. F-type ATPases consist of two structural domains, F(1) containing the extramembraneous catalytic core and F(0) containing the membrane proton channel, linked together by a central stalk and a peripheral stalk. During catalysis, ATP synthesis in the catalytic domain of F(1) is coupled via a rotary mechanism of the central stalk subunits to proton translocation. Its function is as follows. Component of the F(0) channel, it forms part of the peripheral stalk, linking F(1) to F(0). This Klebsiella pneumoniae subsp. pneumoniae (strain ATCC 700721 / MGH 78578) protein is ATP synthase subunit b.